The following is a 309-amino-acid chain: Aspartate carbamoyltransferase catalytic subunit (309 aa).

Residues arginine 49 and threonine 50 each contribute to the carbamoyl phosphate site. Lysine 77 lines the L-aspartate pocket. The carbamoyl phosphate site is built by arginine 99, histidine 127, and glutamine 130. L-aspartate is bound by residues arginine 160 and arginine 211. Positions 252 and 253 each coordinate carbamoyl phosphate.

The protein belongs to the aspartate/ornithine carbamoyltransferase superfamily. ATCase family. In terms of assembly, heterododecamer (2C3:3R2) of six catalytic PyrB chains organized as two trimers (C3), and six regulatory PyrI chains organized as three dimers (R2).

The catalysed reaction is carbamoyl phosphate + L-aspartate = N-carbamoyl-L-aspartate + phosphate + H(+). The protein operates within pyrimidine metabolism; UMP biosynthesis via de novo pathway; (S)-dihydroorotate from bicarbonate: step 2/3. Its function is as follows. Catalyzes the condensation of carbamoyl phosphate and aspartate to form carbamoyl aspartate and inorganic phosphate, the committed step in the de novo pyrimidine nucleotide biosynthesis pathway. This Geobacillus sp. (strain WCH70) protein is Aspartate carbamoyltransferase catalytic subunit.